The chain runs to 477 residues: Diacylglycerol O-acyltransferase 1-2 (477 aa).

A disordered region spans residues 1–48 (MAPPPSLAPDRGGGEPDDALRLRARAAAAAGDAPAPQQQQEQRHQEQQ). The segment covering 12–21 (GGGEPDDALR) has biased composition (basic and acidic residues). Low complexity predominate over residues 25–40 (RAAAAAGDAPAPQQQQ). 7 helical membrane passes run 79 to 99 (HAGL…RLII), 123 to 143 (WPLL…LMVE), 155 to 175 (VVIL…VVVI), 182 to 202 (VLSG…LVSF), 230 to 250 (NIKW…TLCY), 263 to 283 (GWVV…GFII), and 319 to 339 (VWLC…AELL). The FYXDWWN motif signature appears at 346–352 (FYKDWWN). Transmembrane regions (helical) follow at residues 387-407 (GVAI…CVAV), 409-429 (CHIF…LVFL), and 442-462 (VGNM…CVLL). Residue histidine 401 is part of the active site.

It belongs to the membrane-bound acyltransferase family. Sterol o-acyltransferase subfamily.

It localises to the endoplasmic reticulum membrane. It carries out the reaction an acyl-CoA + a 1,2-diacyl-sn-glycerol = a triacyl-sn-glycerol + CoA. The protein operates within glycerolipid metabolism; triacylglycerol biosynthesis. Functionally, involved in triacylglycerol (TAG) synthesis. Catalyzes the acylation of the sn-3 hydroxy group of sn-1,2-diacylglycerol using acyl-CoA. This Oryza sativa subsp. japonica (Rice) protein is Diacylglycerol O-acyltransferase 1-2.